The sequence spans 163 residues: Nucleotide-binding protein YajQ (163 aa).

This sequence belongs to the YajQ family.

In terms of biological role, nucleotide-binding protein. This chain is Nucleotide-binding protein YajQ, found in Salmonella agona (strain SL483).